Consider the following 213-residue polypeptide: Ras-related protein Rab-25 (213 aa).

Residues Ser-21, Gly-24, Lys-25, Thr-26, Asn-27, Ser-38, His-39, Thr-43, and Thr-44 each contribute to the GTP site. Thr-26 contributes to the Mg(2+) binding site. 2 short sequence motifs (switch) span residues 35–49 and 67–84; these read NEFSHDSRTTIGVEF and DTAGLERYRAITSAYYRG. The Mg(2+) site is built by Thr-44 and Asp-67. Residues Gly-70, Asn-125, Lys-126, Asp-128, Ala-156, and Leu-157 each coordinate GTP. 2 S-geranylgeranyl cysteine lipidation sites follow: Cys-209 and Cys-210. Cys-210 carries the cysteine methyl ester modification. Residues 211 to 213 constitute a propeptide, removed in mature form; sequence INL.

This sequence belongs to the small GTPase superfamily. Rab family. Interacts (GTP-bound form) with RAB11FIP1, RAB11FIP2, RAB11FIP3 and RAB11FIP4. Interacts (via the hypervariable C-terminal region) with ITGB1 (via the cytoplasmic region); the interaction is GTP-dependent. Interacts with ITGAV. Associates with the integrin alpha-V/beta-1 heterodimer. Interacts with VPS33B. Mg(2+) is required as a cofactor. As to expression, expression is restricted to epithelial cells. Expressed in the gastrointestinal mucosa, (highest expression seen in the ileum and colon), kidney, and lung. A very minor and variable level of expression is seen in the splenic tissue.

Its subcellular location is the cell membrane. The protein localises to the cell projection. It localises to the pseudopodium membrane. It is found in the cytoplasmic vesicle. The catalysed reaction is GTP + H2O = GDP + phosphate + H(+). Regulated by guanine nucleotide exchange factors (GEFs) which promote the exchange of bound GDP for free GTP. Regulated by GTPase activating proteins (GAPs) which increase the GTP hydrolysis activity. Inhibited by GDP dissociation inhibitors (GDIs) which prevent Rab-GDP dissociation. In terms of biological role, the small GTPases Rab are key regulators of intracellular membrane trafficking, from the formation of transport vesicles to their fusion with membranes. Rabs cycle between an inactive GDP-bound form and an active GTP-bound form that is able to recruit to membranes different set of downstream effectors directly responsible for vesicle formation, movement, tethering and fusion. RAB25 regulates epithelial cell differentiation, proliferation and survival, thereby playing key roles in tumorigenesis. Promotes invasive migration of cells in which it functions to localize and maintain integrin alpha-V/beta-1 at the tips of extending pseudopodia. Involved in the regulation of epithelial morphogenesis through the control of CLDN4 expression and localization at tight junctions. May selectively regulate the apical recycling pathway. Together with MYO5B regulates transcytosis. This is Ras-related protein Rab-25 (RAB25) from Oryctolagus cuniculus (Rabbit).